Here is a 182-residue protein sequence, read N- to C-terminus: Nucleoside-triphosphatase THEP1 (182 aa).

ATP is bound by residues 10–17 (GRPGIGKT) and 102–109 (VVVIDEIG).

The protein belongs to the THEP1 NTPase family.

It catalyses the reaction a ribonucleoside 5'-triphosphate + H2O = a ribonucleoside 5'-diphosphate + phosphate + H(+). In terms of biological role, has nucleotide phosphatase activity towards ATP, GTP, CTP, TTP and UTP. May hydrolyze nucleoside diphosphates with lower efficiency. In Thermofilum pendens (strain DSM 2475 / Hrk 5), this protein is Nucleoside-triphosphatase THEP1.